Reading from the N-terminus, the 79-residue chain is Sec-independent protein translocase protein TatA (79 aa).

The chain crosses the membrane as a helical span at residues 1–21; that stretch reads MGGISIWQLLIVALIVVLLFG. Residues 43-79 form a disordered region; the sequence is MSSEEDKKALEDTEAAKTAQTTQQATEKKPESNKEQA. Positions 46–57 are enriched in basic and acidic residues; sequence EEDKKALEDTEA. Low complexity predominate over residues 58–67; it reads AKTAQTTQQA. A compositionally biased stretch (basic and acidic residues) spans 68–79; that stretch reads TEKKPESNKEQA.

This sequence belongs to the TatA/E family. As to quaternary structure, the Tat system comprises two distinct complexes: a TatABC complex, containing multiple copies of TatA, TatB and TatC subunits, and a separate TatA complex, containing only TatA subunits. Substrates initially bind to the TatABC complex, which probably triggers association of the separate TatA complex to form the active translocon.

The protein localises to the cell inner membrane. Its function is as follows. Part of the twin-arginine translocation (Tat) system that transports large folded proteins containing a characteristic twin-arginine motif in their signal peptide across membranes. TatA could form the protein-conducting channel of the Tat system. The chain is Sec-independent protein translocase protein TatA from Shewanella baltica (strain OS223).